A 210-amino-acid polypeptide reads, in one-letter code: Large ribosomal subunit protein bL9 (210 aa).

The tract at residues 172–210 is disordered; that stretch reads EAAAAALEPDSEEEFEAATPPSELAAEASDEDADDAKEA. The segment covering 199-210 has biased composition (acidic residues); the sequence is ASDEDADDAKEA.

Belongs to the bacterial ribosomal protein bL9 family.

Functionally, binds to the 23S rRNA. The polypeptide is Large ribosomal subunit protein bL9 (Sphingopyxis alaskensis (strain DSM 13593 / LMG 18877 / RB2256) (Sphingomonas alaskensis)).